The following is a 789-amino-acid chain: Protein FLOWERING LOCUS D (789 aa).

Positions 1–23 are disordered; it reads MVSFSAPKKRRRGRSQRSMSSLN. Residues 76-177 enclose the SWIRM domain; sequence NKEATTEALL…FGIAQAIKDK (102 aa). FAD-binding positions include Ser-195, Glu-214, Arg-216, Arg-222, and 240-243; that span reads GGSV. Lys-287 is covalently cross-linked (Glycyl lysine isopeptide (Lys-Gly) (interchain with G-Cter in SUMO)). Residues Glu-595, 604 to 605, and 607 to 612 contribute to the FAD site; these read TM and GAFVTG. Residues Lys-693 and Lys-770 each participate in a glycyl lysine isopeptide (Lys-Gly) (interchain with G-Cter in SUMO) cross-link.

It belongs to the flavin monoamine oxidase family. As to quaternary structure, interacts with HDA6. FAD is required as a cofactor. Sumoylated at Lys-287, Lys-693 and Lys-770 by SIZ1. Sumoylation alters its activity and the histone H4 acetylation status of FLC locus, promoting FLC expression.

Probable histone demethylase that promotes flowering independently of the photoperiod and vernalization pathways by repressing FLOWERING LOCUS C (FLC), a floral repressor that blocks the transition from vegetative to reproductive development. Probably mediates histone H3 'Lys-4' demethylation at FLC locus. Seems to act in partial redundancy with LDL1 and LDL2 to repress FLC expression. Required for histone H4 deacetylation of FLC locus. May be a component of the histone deacetylase complex. Forms a histone deacetylase complex with HDA5, HDA6 and MSI4/FVE that represses FLC gene expression to control flowering time. Required for systemic acquired resistance (SAR) toward pathogenic bacteria (e.g. Pseudomonas syringae pv tomato DC3000 (avrPto)). Together with FLD and MSI4/FVE, contributes to dehydroabietinal-dependent (DA, a diterpenoid tricyclic diterpene) activation of flowering ans SAR. In Arabidopsis thaliana (Mouse-ear cress), this protein is Protein FLOWERING LOCUS D.